A 237-amino-acid chain; its full sequence is Coat protein (237 aa).

Residues 1–24 (MSAPASTTQATGSTTSTTTKTAGA) are disordered.

The protein belongs to the potexvirus capsid protein family.

It is found in the virion. Required for genome encapsidation. Forms ribonucleoprotein complexes along with TGB1 helicase and viral RNA. This chain is Coat protein, found in Brassica campestris (Field mustard).